Consider the following 751-residue polypeptide: MPALGWAVAAILMLQTAMAEPSPGTLPRKAGVFSDLSNQELKAVHSFLWSKKELRLQPSSTTTMAKNTVFLIEMLLPKKYHVLRFLDKGERHPVREARAVIFFGDQEHPNVTEFAVGPLPGPCYMRALSPRPGYQSSWASRPISTAEYALLYHTLQEATKPLHQFFLNTTGFSFQDCHDRCLAFTDVAPRGVASGQRRSWLIIQRYVEGYFLHPTGLELLVDHGSTDAGHWAVEQVWYNGKFYGSPEELARKYADGEVDVVVLEDPLPGGKGHDSTEEPPLFSSHKPRGDFPSPIHVSGPRLVQPHGPRFRLEGNAVLYGGWSFAFRLRSSSGLQVLNVHFGGERIAYEVSVQEAVALYGGHTPAGMQTKYLDVGWGLGSVTHELAPGIDCPETATFLDTFHYYDADDPVHYPRALCLFEMPTGVPLRRHFNSNFKGGFNFYAGLKGQVLVLRTTSTVYNYDYIWDFIFYPNGVMEAKMHATGYVHATFYTPEGLRHGTRLHTHLIGNIHTHLVHYRVDLDVAGTKNSFQTLQMKLENITNPWSPRHRVVQPTLEQTQYSWERQAAFRFKRKLPKYLLFTSPQENPWGHKRTYRLQIHSMADQVLPPGWQEEQAITWARYPLAVTKYRESELCSSSIYHQNDPWHPPVVFEQFLHNNENIENEDLVAWVTVGFLHIPHSEDIPNTATPGNSVGFLLRPFNFFPEDPSLASRDTVIVWPRDNGPNYVQRWIPEDRDCSMPPPFSYNGTYRPV.

A signal peptide spans Met-1–Ala-19. N-linked (GlcNAc...) asparagine glycosylation is found at Asn-110 and Asn-168. A disulfide bridge connects residues Cys-177 and Cys-181. Asp-373 serves as the catalytic Proton acceptor. Cys-391 and Cys-417 are oxidised to a cystine. Tyr-461 acts as the Schiff-base intermediate with substrate; via topaquinone in catalysis. Tyr-461 is subject to 2',4',5'-topaquinone. Cu(2+) contacts are provided by His-510 and His-512. Ca(2+)-binding residues include Asp-519, Leu-520, and Asp-521. An N-linked (GlcNAc...) asparagine glycan is attached at Asn-538. 6 residues coordinate Ca(2+): Glu-562, Phe-653, Asn-656, Glu-658, Asp-664, and Leu-665. His-675 provides a ligand contact to Cu(2+). A glycan (N-linked (GlcNAc...) asparagine) is linked at Asn-745.

The protein belongs to the copper/topaquinone oxidase family. As to quaternary structure, homodimer; disulfide-linked. The cofactor is Cu(2+). Ca(2+) serves as cofactor. L-topaquinone is required as a cofactor. N-glycosylated. In terms of processing, topaquinone (TPQ) is generated by copper-dependent autoxidation of a specific tyrosyl residue. In terms of tissue distribution, widely expressed with higher expression in placenta and kidney.

The protein resides in the secreted. It localises to the extracellular space. It is found in the cell membrane. It carries out the reaction histamine + O2 + H2O = imidazole-4-acetaldehyde + H2O2 + NH4(+). The enzyme catalyses N(tau)-methylhistamine + O2 + H2O = 1-methylimidazole-4-acetaldehyde + H2O2 + NH4(+). It catalyses the reaction putrescine + O2 + H2O = 4-aminobutanal + H2O2 + NH4(+). The catalysed reaction is cadaverine + O2 + H2O = 5-aminopentanal + H2O2 + NH4(+). Its activity is regulated as follows. Inhibited by amiloride and amiloride analogs. Inhibited by isoniazid, cimetidine, clonidine, berenil and pentamidine. Functionally, catalyzes the oxidative deamination of primary amines to the corresponding aldehydes with the concomitant production of hydrogen peroxide and ammonia. Its preferred substrates are the diamines histamine and 1-methylhistamine and it could therefore play a role in allergic and immune responses. Has a broad specificity for diamines and can also act on cadaverine and putrescine, two products of amino acid catabolism. It could also act on polyamines, like spermidine and spermine though less efficiently, and regulate various biological processes. The polypeptide is Diamine oxidase [copper-containing] (Homo sapiens (Human)).